Consider the following 453-residue polypeptide: F-box/FBD/LRR-repeat protein At4g00160 (453 aa).

In terms of domain architecture, F-box spans 15 to 68; it reads KDRISELPDALLIKILSFLPTKIVVATSVFSKQWRPLWKLVPNLEFDSEDYDDK. LRR repeat units lie at residues 89-111, 165-190, 215-239, 247-270, 282-307, and 331-358; these read LESF…LWVG, MKSL…LLSG, VPSL…VINA, IEDL…IFDG, LTSV…IFYQ, and SPKL…KWNE. The region spanning 355–406 is the FBD domain; that stretch reads KWNEPKYVPECLLSHLETFVWRRFDWGREEEKEIATYILKNARRLNKATFST.

This chain is F-box/FBD/LRR-repeat protein At4g00160, found in Arabidopsis thaliana (Mouse-ear cress).